Reading from the N-terminus, the 809-residue chain is Quinate/shikimate dehydrogenase (quinone) (809 aa).

Helical transmembrane passes span 14–34 (VWCFILGLALLITGAFYVIGG), 41–61 (GGSWYFLIAGLMITTSAFFMF), 68–88 (VWLYALAFIGTVIWALIDAGF), 90–110 (FWPLHSRLMFPAGLFAAVMLT), and 127–147 (AYVIGGLTVLGMLGGLYGMFI).

The protein belongs to the bacterial PQQ dehydrogenase family. Pyrroloquinoline quinone serves as cofactor.

It localises to the cell membrane. It carries out the reaction L-quinate + a quinone = 3-dehydroquinate + a quinol. It catalyses the reaction shikimate + a quinone = 3-dehydroshikimate + a quinol. Its pathway is aromatic compound metabolism; 3,4-dihydroxybenzoate biosynthesis; 3-dehydroquinate from D-quinate (PQQ route): step 1/1. Its function is as follows. Can act either on quinate or on shikimate. The polypeptide is Quinate/shikimate dehydrogenase (quinone) (quiA) (Acinetobacter baylyi (strain ATCC 33305 / BD413 / ADP1)).